We begin with the raw amino-acid sequence, 391 residues long: DNA repair protein NreA (391 aa).

A C4-type zinc finger spans residues Cys6–Cys20. Residues Gln382–Phe389 carry the PIP motif motif.

Belongs to the Nre family. Interacts with the DNA polymerase sliding clamp (PCNA) via the PIP (PCNA-interacting peptide) motif.

In terms of biological role, involved in DNA damage repair. The protein is DNA repair protein NreA of Archaeoglobus fulgidus (strain ATCC 49558 / DSM 4304 / JCM 9628 / NBRC 100126 / VC-16).